The chain runs to 218 residues: Carnitine transport permease protein OpuCB (218 aa).

The region spanning 19 to 198 is the ABC transmembrane type-1 domain; the sequence is TWQHLFISLS…ILALVVEFAL (180 aa). Transmembrane regions (helical) follow at residues 23 to 43, 48 to 68, 79 to 101, 149 to 169, and 179 to 199; these read LFIS…TGIL, PKVA…PSLA, VGTL…RNTF, VIAW…DFIF, and LILG…FALG.

Belongs to the binding-protein-dependent transport system permease family. In terms of assembly, the complex is composed of two ATP-binding proteins (OpuCA), two transmembrane proteins (OpuCB and OpuCD) and a solute-binding protein (OpuCC).

Its subcellular location is the cell membrane. In terms of biological role, part of the ABC transporter complex OpuCABCD involved in carnitine uptake. Probably responsible for the translocation of the substrate across the membrane. Involved, with BetL and GbuABC, in osmoprotection and cryoprotection of Listeria. The protein is Carnitine transport permease protein OpuCB (opuCB) of Listeria monocytogenes.